The following is a 290-amino-acid chain: Acetylglutamate kinase (290 aa).

Residues 60 to 61 (GG), arginine 82, and asparagine 187 each bind substrate.

Belongs to the acetylglutamate kinase family. ArgB subfamily.

The protein localises to the cytoplasm. The enzyme catalyses N-acetyl-L-glutamate + ATP = N-acetyl-L-glutamyl 5-phosphate + ADP. Its pathway is amino-acid biosynthesis; L-arginine biosynthesis; N(2)-acetyl-L-ornithine from L-glutamate: step 2/4. Its function is as follows. Catalyzes the ATP-dependent phosphorylation of N-acetyl-L-glutamate. This chain is Acetylglutamate kinase, found in Marinobacter nauticus (strain ATCC 700491 / DSM 11845 / VT8) (Marinobacter aquaeolei).